The following is a 748-amino-acid chain: Cysteine--tRNA ligase, cytoplasmic (748 aa).

A disordered region spans residues 1–25; sequence MADSSGQQGKGRRVQPQWSPPAGTQ. Ala2 carries the post-translational modification N-acetylalanine. Phosphoserine is present on Ser19. Residue Cys55 coordinates Zn(2+). Position 56 (Gly56) interacts with L-cysteine. A 'HIGH' region motif is present at residues 57 to 67; sequence PTVYDASHMGH. Position 79 is a phosphoserine (Arg79). An L-cysteine-binding site is contributed by Thr96. Residues 101–104 carry the 'KIIK' region motif; that stretch reads KIIK. 2 positions are modified to phosphoserine: Ser305 and Ser307. Positions 348, 373, and 377 each coordinate Zn(2+). L-cysteine is bound at residue His373. The short motif at 406–410 is the 'KMSKS' region element; the sequence is KMSKS. Residue Lys409 coordinates ATP. Lys503 carries the N6-acetyllysine modification. The span at 653–679 shows a compositional bias: basic and acidic residues; the sequence is EKRRVEEEKRKKKEEAARRKQEQEAAK. The interval 653–686 is disordered; sequence EKRRVEEEKRKKKEEAARRKQEQEAAKLAKMKIP. Ser746 is modified (phosphoserine).

Belongs to the class-I aminoacyl-tRNA synthetase family. As to quaternary structure, homodimer. Zn(2+) serves as cofactor.

It localises to the cytoplasm. The catalysed reaction is tRNA(Cys) + L-cysteine + ATP = L-cysteinyl-tRNA(Cys) + AMP + diphosphate. Its function is as follows. Catalyzes the ATP-dependent ligation of cysteine to tRNA(Cys). This is Cysteine--tRNA ligase, cytoplasmic from Homo sapiens (Human).